A 385-amino-acid chain; its full sequence is Carbamoyl phosphate synthase small chain (385 aa).

The segment at M1–F196 is CPSase. S51, G245, and G247 together coordinate L-glutamine. One can recognise a Glutamine amidotransferase type-1 domain in the interval H197–S384. Catalysis depends on C273, which acts as the Nucleophile. L-glutamine is bound by residues L274, Q277, N315, and F318. Residues H357 and E359 contribute to the active site.

It belongs to the CarA family. As to quaternary structure, composed of two chains; the small (or glutamine) chain promotes the hydrolysis of glutamine to ammonia, which is used by the large (or ammonia) chain to synthesize carbamoyl phosphate. Tetramer of heterodimers (alpha,beta)4.

The catalysed reaction is hydrogencarbonate + L-glutamine + 2 ATP + H2O = carbamoyl phosphate + L-glutamate + 2 ADP + phosphate + 2 H(+). It carries out the reaction L-glutamine + H2O = L-glutamate + NH4(+). The protein operates within amino-acid biosynthesis; L-arginine biosynthesis; carbamoyl phosphate from bicarbonate: step 1/1. Its pathway is pyrimidine metabolism; UMP biosynthesis via de novo pathway; (S)-dihydroorotate from bicarbonate: step 1/3. Small subunit of the glutamine-dependent carbamoyl phosphate synthetase (CPSase). CPSase catalyzes the formation of carbamoyl phosphate from the ammonia moiety of glutamine, carbonate, and phosphate donated by ATP, constituting the first step of 2 biosynthetic pathways, one leading to arginine and/or urea and the other to pyrimidine nucleotides. The small subunit (glutamine amidotransferase) binds and cleaves glutamine to supply the large subunit with the substrate ammonia. The chain is Carbamoyl phosphate synthase small chain from Buchnera aphidicola subsp. Schizaphis graminum (strain Sg).